Here is a 432-residue protein sequence, read N- to C-terminus: UPF0597 protein APL_1605 (432 aa).

It belongs to the UPF0597 family.

This Actinobacillus pleuropneumoniae serotype 5b (strain L20) protein is UPF0597 protein APL_1605.